A 428-amino-acid chain; its full sequence is Histidinol dehydrogenase (428 aa).

Residues Ser-232, Gln-254, and His-257 each contribute to the substrate site. Zn(2+)-binding residues include Gln-254 and His-257. Catalysis depends on proton acceptor residues Glu-324 and His-325. Residues His-325, Asp-358, Glu-412, and His-417 each coordinate substrate. Asp-358 is a binding site for Zn(2+). Residue His-417 coordinates Zn(2+).

This sequence belongs to the histidinol dehydrogenase family. The cofactor is Zn(2+).

It carries out the reaction L-histidinol + 2 NAD(+) + H2O = L-histidine + 2 NADH + 3 H(+). The protein operates within amino-acid biosynthesis; L-histidine biosynthesis; L-histidine from 5-phospho-alpha-D-ribose 1-diphosphate: step 9/9. Catalyzes the sequential NAD-dependent oxidations of L-histidinol to L-histidinaldehyde and then to L-histidine. The polypeptide is Histidinol dehydrogenase (Thermotoga maritima (strain ATCC 43589 / DSM 3109 / JCM 10099 / NBRC 100826 / MSB8)).